Reading from the N-terminus, the 526-residue chain is Cytochrome P450 monooxygenase 58 (526 aa).

Helical transmembrane passes span 13 to 33 (IASS…LLLI), 115 to 135 (FIMA…GYGK), and 306 to 326 (IGAG…AMTL). Cysteine 451 contributes to the heme binding site.

Belongs to the cytochrome P450 family. Requires heme as cofactor.

The protein localises to the membrane. The protein operates within secondary metabolite biosynthesis. Its function is as follows. Cytochrome P450 monooxygenase that is able to use delta(6)-protoilludene as a substrate to produce delta(6)-protoilludene-8-ol. This is Cytochrome P450 monooxygenase 58 from Postia placenta (strain ATCC 44394 / Madison 698-R) (Brown rot fungus).